The following is a 399-amino-acid chain: Nicotinate phosphoribosyltransferase (399 aa).

H217 is subject to Phosphohistidine; by autocatalysis.

It belongs to the NAPRTase family. Transiently phosphorylated on a His residue during the reaction cycle. Phosphorylation strongly increases the affinity for substrates and increases the rate of nicotinate D-ribonucleotide production. Dephosphorylation regenerates the low-affinity form of the enzyme, leading to product release.

It catalyses the reaction nicotinate + 5-phospho-alpha-D-ribose 1-diphosphate + ATP + H2O = nicotinate beta-D-ribonucleotide + ADP + phosphate + diphosphate. It participates in cofactor biosynthesis; NAD(+) biosynthesis; nicotinate D-ribonucleotide from nicotinate: step 1/1. Its function is as follows. Catalyzes the synthesis of beta-nicotinate D-ribonucleotide from nicotinate and 5-phospho-D-ribose 1-phosphate at the expense of ATP. This is Nicotinate phosphoribosyltransferase from Burkholderia ambifaria (strain MC40-6).